We begin with the raw amino-acid sequence, 414 residues long: Gamma-glutamyl phosphate reductase (414 aa).

Belongs to the gamma-glutamyl phosphate reductase family.

The protein resides in the cytoplasm. The enzyme catalyses L-glutamate 5-semialdehyde + phosphate + NADP(+) = L-glutamyl 5-phosphate + NADPH + H(+). Its pathway is amino-acid biosynthesis; L-proline biosynthesis; L-glutamate 5-semialdehyde from L-glutamate: step 2/2. Functionally, catalyzes the NADPH-dependent reduction of L-glutamate 5-phosphate into L-glutamate 5-semialdehyde and phosphate. The product spontaneously undergoes cyclization to form 1-pyrroline-5-carboxylate. This Francisella philomiragia subsp. philomiragia (strain ATCC 25017 / CCUG 19701 / FSC 153 / O#319-036) protein is Gamma-glutamyl phosphate reductase.